The following is a 371-amino-acid chain: tRNA-specific 2-thiouridylase MnmA (371 aa).

Residues 16–23 and Met-42 each bind ATP; that span reads GMSGGVDS. Residues 102–104 are interaction with target base in tRNA; it reads NPD. Residue Cys-107 is the Nucleophile of the active site. Cys-107 and Cys-204 are joined by a disulfide. ATP is bound at residue Gly-132. The segment at 154–156 is interaction with tRNA; it reads KDQ. The active-site Cysteine persulfide intermediate is Cys-204. The interaction with tRNA stretch occupies residues 316–317; the sequence is RY.

It belongs to the MnmA/TRMU family.

Its subcellular location is the cytoplasm. It catalyses the reaction S-sulfanyl-L-cysteinyl-[protein] + uridine(34) in tRNA + AH2 + ATP = 2-thiouridine(34) in tRNA + L-cysteinyl-[protein] + A + AMP + diphosphate + H(+). In terms of biological role, catalyzes the 2-thiolation of uridine at the wobble position (U34) of tRNA, leading to the formation of s(2)U34. This Shewanella halifaxensis (strain HAW-EB4) protein is tRNA-specific 2-thiouridylase MnmA.